The primary structure comprises 1849 residues: Breast cancer type 1 susceptibility protein homolog (1849 aa).

Residue Met1 is modified to N-acetylmethionine. The RING-type zinc-finger motif lies at 24–65 (CPICLELIKEPVSTKCDHIFCKFCMLKLLNQKKGPSQCPLCK). Position 114 is a phosphoserine (Ser114). Residues Lys301 and Lys339 each participate in a glycyl lysine isopeptide (Lys-Gly) (interchain with G-Cter in SUMO2) cross-link. Phosphoserine occurs at positions 395, 398, 423, and 434. Residues Lys457 and Lys517 each participate in a glycyl lysine isopeptide (Lys-Gly) (interchain with G-Cter in SUMO2) cross-link. The segment covering 530–542 (KMTEGTDQTEQKC) has biased composition (basic and acidic residues). Disordered stretches follow at residues 530–558 (KMTEGTDQTEQKCHGMNITSDGHENKTKR) and 620–662 (ELEL…RQSQ). Phosphoserine occurs at positions 691, 711, and 720. The segment at 882–912 (SGSLRDQSPRDPLKCRQKEDSQGKSESKSQH) is disordered. Residues 888 to 910 (QSPRDPLKCRQKEDSQGKSESKS) are compositionally biased toward basic and acidic residues. A Glycyl lysine isopeptide (Lys-Gly) (interchain with G-Cter in SUMO2) cross-link involves residue Lys981. Ser982 is subject to Phosphoserine; by CHEK2. Ser1002 is modified (phosphoserine). Over residues 1036-1061 (NSVNEVGSSTNEVGSSVNEVGSSGEN) the composition is skewed to low complexity. Positions 1036-1070 (NSVNEVGSSTNEVGSSVNEVGSSGENIQAEPGRNR) are disordered. A Glycyl lysine isopeptide (Lys-Gly) (interchain with G-Cter in SUMO2) cross-link involves residue Lys1073. A phosphoserine mark is found at Ser1138, Ser1184, Ser1211, Ser1212, Ser1274, Ser1323, Ser1330, Ser1336, and Ser1382. Positions 1172-1211 (FSESVQKGEFRGSPGPFTHTHLAQGHQRGAGKLESEETVS) are disordered. Disordered regions lie at residues 1321 to 1389 (YQSE…ILTT), 1412 to 1433 (VLERHGSQPSHSSASLTADSRG), and 1452 to 1493 (SEKS…RSSA). The span at 1336 to 1360 (SDDEERETGLEEDSCQEEQSVDSDL) shows a compositional bias: acidic residues. Polar residues-rich tracts occupy residues 1370–1389 (ETSLSEDGVGLSSQSDILTT) and 1418–1429 (SQPSHSSASLTA). At Thr1389 the chain carries Phosphothreonine. Positions 1392–1419 (RDTMQDNLLKLQQEMAELEAVLERHGSQ) are interaction with PALB2. 3 positions are modified to phosphoserine: Ser1418, Ser1452, and Ser1518. 2 disordered regions span residues 1562–1590 (SLFSHEPESDPSEDRAAEPAHVHSMPPSA) and 1621–1640 (REESMSKEKPEVISSTERSK). Basic and acidic residues-rich tracts occupy residues 1566–1582 (HEPESDPSEDRAAEPAH) and 1621–1631 (REESMSKEKPE). 2 consecutive BRCT domains span residues 1642-1729 (RLSM…DFEV) and 1749-1848 (RDKK…TYLV).

Heterodimer with BARD1. Part of the BRCA1-associated genome surveillance complex (BASC), which contains BRCA1, MSH2, MSH6, MLH1, ATM, BLM, PMS2 and the MRE11-RAD50-NBN protein (MRN) complex. This association could be a dynamic process changing throughout the cell cycle and within subnuclear domains. Component of the BRCA1-A complex, at least composed of BRCA1, BARD1, UIMC1/RAP80, ABRAXAS1, BRCC3/BRCC36, BABAM2 and BABAM1/NBA1. Interacts (via the BRCT domains) with ABRAXAS1 (phosphorylated form); this is important for recruitment to sites of DNA damage. Can form a heterotetramer with two molecules of ABRAXAS1 (phosphorylated form). Component of the BRCA1-RBBP8 complex. Interacts (via the BRCT domains) with RBBP8 ('Ser-327' phosphorylated form); the interaction ubiquitinates RBBP8, regulates CHEK1 activation, and involves RBBP8 in BRCA1-dependent G2/M checkpoint control on DNA damage. Associates with RNA polymerase II holoenzyme. Interacts with SMC1A, NELFB, DCLRE1C, CLSPN. CHEK1, CHEK2, BAP1, BRCC3, UBXN1 and PCLAF. Interacts (via BRCT domains) with BRIP1 (phosphorylated form). Interacts with FANCD2 (ubiquitinated form). Interacts with H2AX (phosphorylated on 'Ser-140'). Interacts (via the BRCT domains) with ACACA (phosphorylated form); the interaction prevents dephosphorylation of ACACA. Part of a BRCA complex containing BRCA1, BRCA2 and PALB2. Interacts directly with PALB2; the interaction is essential for its function in HRR. Interacts directly with BRCA2; the interaction occurs only in the presence of PALB2 which serves as the bridging protein. Interacts (via the BRCT domains) with LMO4; the interaction represses the transcriptional activity of BRCA1. Interacts (via the BRCT domains) with CCAR2 (via N-terminus); the interaction represses the transcriptional activator activity of BRCA1. Interacts with EXD2. Interacts (via C-terminus) with DHX9; this interaction is direct and links BRCA1 to the RNA polymerase II holoenzyme. Interacts with DNA helicase ZGRF1; the interaction is increased following DNA damage induction. Post-translationally, phosphorylated in response to IR, UV, and various stimuli that cause checkpoint activation, probably by ATM or ATR. Phosphorylation at Ser-982 by CHEK2 regulates mitotic spindle assembly. Phosphorylation by AURKA regulates centrosomal microtubule nucleation. In terms of processing, autoubiquitinated, undergoes 'Lys-6'-linked polyubiquitination. 'Lys-6'-linked polyubiquitination does not promote degradation.

It is found in the nucleus. It localises to the chromosome. The protein resides in the cytoplasm. The catalysed reaction is S-ubiquitinyl-[E2 ubiquitin-conjugating enzyme]-L-cysteine + [acceptor protein]-L-lysine = [E2 ubiquitin-conjugating enzyme]-L-cysteine + N(6)-ubiquitinyl-[acceptor protein]-L-lysine.. The protein operates within protein modification; protein ubiquitination. In terms of biological role, E3 ubiquitin-protein ligase that specifically mediates the formation of 'Lys-6'-linked polyubiquitin chains and plays a central role in DNA repair by facilitating cellular responses to DNA damage. It is unclear whether it also mediates the formation of other types of polyubiquitin chains. The BRCA1-BARD1 heterodimer coordinates a diverse range of cellular pathways such as DNA damage repair, ubiquitination and transcriptional regulation to maintain genomic stability. Regulates centrosomal microtubule nucleation. Required for appropriate cell cycle arrests after ionizing irradiation in both the S-phase and the G2 phase of the cell cycle. Required for FANCD2 targeting to sites of DNA damage. Inhibits lipid synthesis by binding to inactive phosphorylated ACACA and preventing its dephosphorylation. Contributes to homologous recombination repair (HRR) via its direct interaction with PALB2, fine-tunes recombinational repair partly through its modulatory role in the PALB2-dependent loading of BRCA2-RAD51 repair machinery at DNA breaks. Component of the BRCA1-RBBP8 complex which regulates CHEK1 activation and controls cell cycle G2/M checkpoints on DNA damage via BRCA1-mediated ubiquitination of RBBP8. Acts as a transcriptional activator. The sequence is that of Breast cancer type 1 susceptibility protein homolog (BRCA1) from Bos taurus (Bovine).